The chain runs to 325 residues: Putative HTH-type transcriptional regulatory protein MK1005 (325 aa).

The 63-residue stretch at 128–190 (VDELDVSRVR…FERRVAELLE (63 aa)) folds into the HTH cro/C1-type domain. Positions 139 to 158 (RQLRREGGRITLARAEEADV) form a DNA-binding region, H-T-H motif.

In Methanopyrus kandleri (strain AV19 / DSM 6324 / JCM 9639 / NBRC 100938), this protein is Putative HTH-type transcriptional regulatory protein MK1005.